A 524-amino-acid chain; its full sequence is D-3-phosphoglycerate dehydrogenase (524 aa).

Residues 149–150, Asp169, 229–231, and Asp255 contribute to the NAD(+) site; these read RI and CAR. Arg231 is a catalytic residue. Glu260 is an active-site residue. Residue His278 is the Proton donor of the active site. 278–281 is a binding site for NAD(+); that stretch reads HQGA. In terms of domain architecture, ACT spans 452 to 524; the sequence is LAIIKHIDRP…NIKDVAVINL (73 aa).

The protein belongs to the D-isomer specific 2-hydroxyacid dehydrogenase family.

The catalysed reaction is (2R)-3-phosphoglycerate + NAD(+) = 3-phosphooxypyruvate + NADH + H(+). The protein operates within amino-acid biosynthesis; L-serine biosynthesis; L-serine from 3-phospho-D-glycerate: step 1/3. In Methanocaldococcus jannaschii (strain ATCC 43067 / DSM 2661 / JAL-1 / JCM 10045 / NBRC 100440) (Methanococcus jannaschii), this protein is D-3-phosphoglycerate dehydrogenase (serA).